A 161-amino-acid polypeptide reads, in one-letter code: Cyclic pyranopterin monophosphate synthase (161 aa).

Residues 75–77 and 113–114 contribute to the substrate site; these read LCH and ME. Asp-128 is an active-site residue.

This sequence belongs to the MoaC family. As to quaternary structure, homohexamer; trimer of dimers.

The catalysed reaction is (8S)-3',8-cyclo-7,8-dihydroguanosine 5'-triphosphate = cyclic pyranopterin phosphate + diphosphate. The protein operates within cofactor biosynthesis; molybdopterin biosynthesis. Functionally, catalyzes the conversion of (8S)-3',8-cyclo-7,8-dihydroguanosine 5'-triphosphate to cyclic pyranopterin monophosphate (cPMP). The sequence is that of Cyclic pyranopterin monophosphate synthase from Salmonella typhi.